Reading from the N-terminus, the 72-residue chain is Translational regulator CsrA (72 aa).

The protein belongs to the CsrA/RsmA family. Homodimer; the beta-strands of each monomer intercalate to form a hydrophobic core, while the alpha-helices form wings that extend away from the core.

The protein resides in the cytoplasm. In terms of biological role, a translational regulator that binds mRNA to regulate translation initiation and/or mRNA stability. Usually binds in the 5'-UTR at or near the Shine-Dalgarno sequence preventing ribosome-binding, thus repressing translation. Its main target seems to be the major flagellin gene, while its function is anatagonized by FliW. The sequence is that of Translational regulator CsrA from Clostridium botulinum (strain Loch Maree / Type A3).